The primary structure comprises 214 residues: Pyridoxine/pyridoxamine 5'-phosphate oxidase (214 aa).

Residues 8-11 (RTNY) and lysine 66 each bind substrate. FMN is bound by residues 61–66 (RIVLIK), 76–77 (FT), arginine 82, lysine 83, and glutamine 105. Tyrosine 123, arginine 127, and serine 131 together coordinate substrate. FMN contacts are provided by residues 140–141 (QS) and tryptophan 184. 190–192 (RLH) is a substrate binding site. Residue arginine 194 coordinates FMN.

The protein belongs to the pyridoxamine 5'-phosphate oxidase family. Homodimer. FMN serves as cofactor.

The catalysed reaction is pyridoxamine 5'-phosphate + O2 + H2O = pyridoxal 5'-phosphate + H2O2 + NH4(+). The enzyme catalyses pyridoxine 5'-phosphate + O2 = pyridoxal 5'-phosphate + H2O2. It functions in the pathway cofactor metabolism; pyridoxal 5'-phosphate salvage; pyridoxal 5'-phosphate from pyridoxamine 5'-phosphate: step 1/1. It participates in cofactor metabolism; pyridoxal 5'-phosphate salvage; pyridoxal 5'-phosphate from pyridoxine 5'-phosphate: step 1/1. In terms of biological role, catalyzes the oxidation of either pyridoxine 5'-phosphate (PNP) or pyridoxamine 5'-phosphate (PMP) into pyridoxal 5'-phosphate (PLP). The chain is Pyridoxine/pyridoxamine 5'-phosphate oxidase from Burkholderia thailandensis (strain ATCC 700388 / DSM 13276 / CCUG 48851 / CIP 106301 / E264).